A 114-amino-acid chain; its full sequence is Transmembrane protein 14DP (114 aa).

4 helical membrane passes run 8–28, 36–56, 63–80, and 83–103; these read LVPL…GGIV, APSL…AYQL, VWDF…IMGM, and YYYG…LMAA.

The protein belongs to the TMEM14 family.

It is found in the membrane. The polypeptide is Transmembrane protein 14DP (TMEM14DP) (Homo sapiens (Human)).